A 118-amino-acid polypeptide reads, in one-letter code: D-dopachrome decarboxylase (118 aa).

The residue at position 2 (Pro2) is an N-acetylproline. Lys33 bears the N6-acetyllysine mark.

It belongs to the MIF family. Homotrimer.

Its subcellular location is the cytoplasm. It catalyses the reaction D-dopachrome + H(+) = 5,6-dihydroxyindole + CO2. In terms of biological role, tautomerization of D-dopachrome with decarboxylation to give 5,6-dihydroxyindole (DHI). The sequence is that of D-dopachrome decarboxylase (DDT) from Bos taurus (Bovine).